Here is a 329-residue protein sequence, read N- to C-terminus: Glycerol-3-phosphate dehydrogenase [NAD(P)+] (329 aa).

Positions 11, 30, and 103 each coordinate NADPH. Residues K103, G132, and S134 each coordinate sn-glycerol 3-phosphate. An NADPH-binding site is contributed by A136. K187, D240, S250, R251, and N252 together coordinate sn-glycerol 3-phosphate. K187 acts as the Proton acceptor in catalysis. Residue R251 participates in NADPH binding. Positions 275 and 277 each coordinate NADPH.

The protein belongs to the NAD-dependent glycerol-3-phosphate dehydrogenase family.

It is found in the cytoplasm. It catalyses the reaction sn-glycerol 3-phosphate + NAD(+) = dihydroxyacetone phosphate + NADH + H(+). The enzyme catalyses sn-glycerol 3-phosphate + NADP(+) = dihydroxyacetone phosphate + NADPH + H(+). The protein operates within membrane lipid metabolism; glycerophospholipid metabolism. In terms of biological role, catalyzes the reduction of the glycolytic intermediate dihydroxyacetone phosphate (DHAP) to sn-glycerol 3-phosphate (G3P), the key precursor for phospholipid synthesis. In Nitrosomonas europaea (strain ATCC 19718 / CIP 103999 / KCTC 2705 / NBRC 14298), this protein is Glycerol-3-phosphate dehydrogenase [NAD(P)+].